We begin with the raw amino-acid sequence, 130 residues long: Small ribosomal subunit protein uS9 (130 aa).

The interval 108-130 is disordered; it reads PRMKERRKYGLKKARRAPQFSKR. The segment covering 111–130 has biased composition (basic residues); sequence KERRKYGLKKARRAPQFSKR.

Belongs to the universal ribosomal protein uS9 family.

This is Small ribosomal subunit protein uS9 from Desulforamulus reducens (strain ATCC BAA-1160 / DSM 100696 / MI-1) (Desulfotomaculum reducens).